The following is a 185-amino-acid chain: Large ribosomal subunit protein uL5 (185 aa).

Belongs to the universal ribosomal protein uL5 family. In terms of assembly, part of the 50S ribosomal subunit; part of the 5S rRNA/L5/L18/L25 subcomplex. Contacts the 5S rRNA and the P site tRNA. Forms a bridge to the 30S subunit in the 70S ribosome.

In terms of biological role, this is one of the proteins that bind and probably mediate the attachment of the 5S RNA into the large ribosomal subunit, where it forms part of the central protuberance. In the 70S ribosome it contacts protein S13 of the 30S subunit (bridge B1b), connecting the 2 subunits; this bridge is implicated in subunit movement. Contacts the P site tRNA; the 5S rRNA and some of its associated proteins might help stabilize positioning of ribosome-bound tRNAs. This chain is Large ribosomal subunit protein uL5, found in Caulobacter sp. (strain K31).